A 237-amino-acid chain; its full sequence is Uridylate kinase (237 aa).

Lysine 10–glycine 13 provides a ligand contact to ATP. Glycine 52 is a binding site for UMP. Residues glycine 53 and arginine 57 each coordinate ATP. Residues aspartate 72 and threonine 133–threonine 140 each bind UMP. Threonine 160, tyrosine 166, and aspartate 169 together coordinate ATP.

Belongs to the UMP kinase family. As to quaternary structure, homohexamer.

It is found in the cytoplasm. It carries out the reaction UMP + ATP = UDP + ADP. It functions in the pathway pyrimidine metabolism; CTP biosynthesis via de novo pathway; UDP from UMP (UMPK route): step 1/1. Inhibited by UTP. Functionally, catalyzes the reversible phosphorylation of UMP to UDP. The chain is Uridylate kinase from Thiobacillus denitrificans (strain ATCC 25259 / T1).